A 172-amino-acid chain; its full sequence is MDKVLNREESMELMDLLGLERAAWGNLPLMRKAYLRKCKEFHPDKGGDEDKMKRMNTLYKKMEQDVKVAHQPDFGAWHSSEVGSDFPPCPDTLYCKDWPLCATKPSAHCPCMLCQLRNKHVYRKFLRRDPLVWIDCYCFDCFRQWFGLDLNEEALLWWSHIIGETPFRDLKL.

Residue Met1 is modified to N-acetylmethionine; by host. The region spanning 12-75 (ELMDLLGLER…VKVAHQPDFG (64 aa)) is the J domain. The C4-type; atypical zinc-finger motif lies at 101 to 114 (CATKPSAHCPCMLC). An H1C3-type; atypical zinc finger spans residues 120 to 141 (HVYRKFLRRDPLVWIDCYCFDC).

In terms of assembly, interacts with host PPP2R1A; the interaction inhibits PP2A activity.

It is found in the host cytoplasm. The protein localises to the host nucleus. Its function is as follows. Promotes efficient viral genome replication by accelerating both G1 and S phase progression of the cell cycle. Inhibits host PP2A by binding to the A subunit, thereby displacing lower affinity regulatory B subunit. Inactivation of PP2A in turn results in the transactivation of cyclin A and cyclin D1 promoters. Late during the infection cycle, ST may induce dephosphorylation of host MTOR, leading to the inhibition of cap-dependent translation. May establish and maintain high levels of viral genomes during persistent infection in cell culture. The chain is Small t antigen from Simian virus 12 (strain wt100) (SV-12).